Here is a 461-residue protein sequence, read N- to C-terminus: Putative 2,3-dihydroxypropane-1-sulfonate exporter (461 aa).

Residues 1–20 are Cytoplasmic-facing; sequence MSHITTEDPATLRLPFKEKL. Residues 21-41 form a helical membrane-spanning segment; that stretch reads SYGIGDLASNILLDIGTLYLL. Residues 42–47 are Periplasmic-facing; it reads KFYTDV. The helical transmembrane segment at 48 to 68 threads the bilayer; it reads LGLPGTYGGIIFLISKFFTAF. Topologically, residues 69–92 are cytoplasmic; it reads TDMGTGIMLDSRRKIGPKGKFRPF. The chain crosses the membrane as a helical span at residues 93-113; sequence ILYASFPVTLLAIANFVGTPF. The Periplasmic portion of the chain corresponds to 114–123; that stretch reads DVTGKTVMAT. A helical transmembrane segment spans residues 124 to 144; that stretch reads ILFMLYGLFFSMMNCSYGAMV. Over 145-162 the chain is Cytoplasmic; it reads PAITKNPNERASLAAWRQ. A helical membrane pass occupies residues 163–183; it reads GGATLGLLLCTVGFVPVMNLI. At 184–188 the chain is on the periplasmic side; sequence EGNQQ. The helical transmembrane segment at 189–209 threads the bilayer; the sequence is LGYIFAATLFSLFGLLFMWIC. Topologically, residues 210–243 are cytoplasmic; the sequence is YSGVKERYVETQPANPAQKPGLLQSFRAIAGNRP. A helical membrane pass occupies residues 244-264; sequence LFILCIANLCTLGAFNVKLAI. At 265-276 the chain is on the periplasmic side; sequence QVYYTQYVLNDP. A helical membrane pass occupies residues 277 to 297; sequence ILLSYMGFFSMGCIFIGVFLM. Topologically, residues 298–308 are cytoplasmic; the sequence is PASVRRFGKKK. The helical transmembrane segment at 309–329 threads the bilayer; the sequence is VYIGGLLIWVLGDLLNYFFGG. Position 330 (G330) is a topological domain, periplasmic. A helical membrane pass occupies residues 331-351; it reads SVSFVAFSCLAFFGSAFVNSL. At 352 to 387 the chain is on the cytoplasmic side; the sequence is NWALVSDTVEYGEWRTGVRSEGTVYTGFTFFRKVSQ. The chain crosses the membrane as a helical span at residues 388 to 408; the sequence is ALAGFFPGWMLTQIGYVPNVA. Residues 409 to 419 are Periplasmic-facing; that stretch reads QADHTIEGLRQ. Residues 420–440 form a helical membrane-spanning segment; sequence LIFIYPSALAVVTIVAMGCFY. Topologically, residues 441–461 are cytoplasmic; that stretch reads SLNEKMYVRIVEEIEARKRTA.

Belongs to the sodium:galactoside symporter (TC 2.A.2) family.

It localises to the cell inner membrane. Functionally, could be involved in the export of 2,3-dihydroxypropane-1-sulfonate (DHPS). This is Putative 2,3-dihydroxypropane-1-sulfonate exporter (yihP) from Escherichia coli (strain K12).